A 532-amino-acid chain; its full sequence is CTP synthase (532 aa).

The interval 1 to 267 is amidoligase domain; the sequence is MTKYIFVTGG…DDIVLEHLQL (267 aa). Ser13 lines the CTP pocket. Ser13 lines the UTP pocket. 14 to 19 is an ATP binding site; that stretch reads SIGKGI. Residue Tyr54 coordinates L-glutamine. Asp71 lines the ATP pocket. Asp71 and Glu141 together coordinate Mg(2+). CTP is bound by residues 148–150, 188–193, and Lys224; these read DIE and KTKPTQ. Residues 188 to 193 and Lys224 contribute to the UTP site; that span reads KTKPTQ. The region spanning 292 to 532 is the Glutamine amidotransferase type-1 domain; it reads RIGLVGKYVS…DFVGAALNNK (241 aa). Gly354 is an L-glutamine binding site. Catalysis depends on Cys381, which acts as the Nucleophile; for glutamine hydrolysis. Residues 382–385, Glu405, and Arg462 contribute to the L-glutamine site; that span reads LGMQ. Catalysis depends on residues His507 and Glu509.

This sequence belongs to the CTP synthase family. In terms of assembly, homotetramer.

The enzyme catalyses UTP + L-glutamine + ATP + H2O = CTP + L-glutamate + ADP + phosphate + 2 H(+). It carries out the reaction L-glutamine + H2O = L-glutamate + NH4(+). It catalyses the reaction UTP + NH4(+) + ATP = CTP + ADP + phosphate + 2 H(+). Its pathway is pyrimidine metabolism; CTP biosynthesis via de novo pathway; CTP from UDP: step 2/2. With respect to regulation, allosterically activated by GTP, when glutamine is the substrate; GTP has no effect on the reaction when ammonia is the substrate. The allosteric effector GTP functions by stabilizing the protein conformation that binds the tetrahedral intermediate(s) formed during glutamine hydrolysis. Inhibited by the product CTP, via allosteric rather than competitive inhibition. In terms of biological role, catalyzes the ATP-dependent amination of UTP to CTP with either L-glutamine or ammonia as the source of nitrogen. Regulates intracellular CTP levels through interactions with the four ribonucleotide triphosphates. The sequence is that of CTP synthase from Listeria innocua serovar 6a (strain ATCC BAA-680 / CLIP 11262).